Here is a 707-residue protein sequence, read N- to C-terminus: Ribosomal RNA large subunit methyltransferase K/L (707 aa).

Residues 43–154 (QIYRCCLWSR…KDKAILGVDM (112 aa)) enclose the THUMP domain.

The protein belongs to the methyltransferase superfamily. RlmKL family.

The protein resides in the cytoplasm. It catalyses the reaction guanosine(2445) in 23S rRNA + S-adenosyl-L-methionine = N(2)-methylguanosine(2445) in 23S rRNA + S-adenosyl-L-homocysteine + H(+). It carries out the reaction guanosine(2069) in 23S rRNA + S-adenosyl-L-methionine = N(2)-methylguanosine(2069) in 23S rRNA + S-adenosyl-L-homocysteine + H(+). Its function is as follows. Specifically methylates the guanine in position 2445 (m2G2445) and the guanine in position 2069 (m7G2069) of 23S rRNA. This is Ribosomal RNA large subunit methyltransferase K/L from Vibrio campbellii (strain ATCC BAA-1116).